The sequence spans 239 residues: Leucine-rich repeat-containing protein 57 (239 aa).

Residue Gly-2 is the site of N-myristoyl glycine attachment. 8 LRR repeats span residues 39 to 60 (NLRT…LIGK), 63 to 84 (LLKS…ICNL), 86 to 107 (KLET…FGQL), 109 to 131 (ALKT…CSLR), 132 to 153 (HLDV…VGEL), 154 to 175 (QVIE…ISCC), 177 to 197 (RLKI…PQSI), and 202 to 222 (QICL…RELE).

The protein resides in the membrane. The polypeptide is Leucine-rich repeat-containing protein 57 (LRRC57) (Homo sapiens (Human)).